A 115-amino-acid chain; its full sequence is uncharacterized protein (115 aa).

A helical membrane pass occupies residues 36–56 (SFFSLGLIACFCIFLIIVLSE).

The protein localises to the membrane. This is an uncharacterized protein from Saccharomyces cerevisiae (strain ATCC 204508 / S288c) (Baker's yeast).